Here is a 525-residue protein sequence, read N- to C-terminus: Peptide chain release factor 3 (525 aa).

The 268-residue stretch at 9 to 276 (AKRRTFAIIS…GFTRYAPAPQ (268 aa)) folds into the tr-type G domain. GTP-binding positions include 18–25 (SHPDAGKT), 86–90 (DTPGH), and 140–143 (NKFD).

The protein belongs to the TRAFAC class translation factor GTPase superfamily. Classic translation factor GTPase family. PrfC subfamily.

Its subcellular location is the cytoplasm. Its function is as follows. Increases the formation of ribosomal termination complexes and stimulates activities of RF-1 and RF-2. It binds guanine nucleotides and has strong preference for UGA stop codons. It may interact directly with the ribosome. The stimulation of RF-1 and RF-2 is significantly reduced by GTP and GDP, but not by GMP. The protein is Peptide chain release factor 3 of Francisella tularensis subsp. tularensis (strain WY96-3418).